A 577-amino-acid polypeptide reads, in one-letter code: Proline--tRNA ligase (577 aa).

This sequence belongs to the class-II aminoacyl-tRNA synthetase family. ProS type 1 subfamily. As to quaternary structure, homodimer.

The protein resides in the cytoplasm. It catalyses the reaction tRNA(Pro) + L-proline + ATP = L-prolyl-tRNA(Pro) + AMP + diphosphate. In terms of biological role, catalyzes the attachment of proline to tRNA(Pro) in a two-step reaction: proline is first activated by ATP to form Pro-AMP and then transferred to the acceptor end of tRNA(Pro). As ProRS can inadvertently accommodate and process non-cognate amino acids such as alanine and cysteine, to avoid such errors it has two additional distinct editing activities against alanine. One activity is designated as 'pretransfer' editing and involves the tRNA(Pro)-independent hydrolysis of activated Ala-AMP. The other activity is designated 'posttransfer' editing and involves deacylation of mischarged Ala-tRNA(Pro). The misacylated Cys-tRNA(Pro) is not edited by ProRS. This is Proline--tRNA ligase from Janthinobacterium sp. (strain Marseille) (Minibacterium massiliensis).